A 677-amino-acid chain; its full sequence is UvrABC system protein B (677 aa).

One can recognise a Helicase ATP-binding domain in the interval 27-414 (ANLGHGVRDQ…SQGVIAEQII (388 aa)). 40–47 (GVTGSGKT) contacts ATP. Residues 93–116 (YYDYYQPEAYVPASDTYIEKDSSI) carry the Beta-hairpin motif. A Helicase C-terminal domain is found at 432–594 (QVDDLLAECR…IEPRTIRKSL (163 aa)). A UVR domain is found at 638-673 (AKHIQKLEREMREAAKELEFERAATLRDRIRLLRER).

It belongs to the UvrB family. In terms of assembly, forms a heterotetramer with UvrA during the search for lesions. Interacts with UvrC in an incision complex.

It is found in the cytoplasm. In terms of biological role, the UvrABC repair system catalyzes the recognition and processing of DNA lesions. A damage recognition complex composed of 2 UvrA and 2 UvrB subunits scans DNA for abnormalities. Upon binding of the UvrA(2)B(2) complex to a putative damaged site, the DNA wraps around one UvrB monomer. DNA wrap is dependent on ATP binding by UvrB and probably causes local melting of the DNA helix, facilitating insertion of UvrB beta-hairpin between the DNA strands. Then UvrB probes one DNA strand for the presence of a lesion. If a lesion is found the UvrA subunits dissociate and the UvrB-DNA preincision complex is formed. This complex is subsequently bound by UvrC and the second UvrB is released. If no lesion is found, the DNA wraps around the other UvrB subunit that will check the other stand for damage. The polypeptide is UvrABC system protein B (Nitratidesulfovibrio vulgaris (strain ATCC 29579 / DSM 644 / CCUG 34227 / NCIMB 8303 / VKM B-1760 / Hildenborough) (Desulfovibrio vulgaris)).